The chain runs to 514 residues: Histidine ammonia-lyase (514 aa).

The segment at residues 146–148 (ASG) is a cross-link (5-imidazolinone (Ala-Gly)). A 2,3-didehydroalanine (Ser) modification is found at Ser147.

This sequence belongs to the PAL/histidase family. In terms of processing, contains an active site 4-methylidene-imidazol-5-one (MIO), which is formed autocatalytically by cyclization and dehydration of residues Ala-Ser-Gly.

Its subcellular location is the cytoplasm. It carries out the reaction L-histidine = trans-urocanate + NH4(+). The protein operates within amino-acid degradation; L-histidine degradation into L-glutamate; N-formimidoyl-L-glutamate from L-histidine: step 1/3. In Clostridium tetani (strain Massachusetts / E88), this protein is Histidine ammonia-lyase.